The primary structure comprises 61 residues: U-stichotoxin-Hcr1b (61 aa).

The N-terminal stretch at 1-19 (PILIFAFVMFAVMVNAKPS) is a signal peptide. The propeptide occupies 20–31 (IDDAEMKREPKP). Cystine bridges form between Cys-38/Cys-49 and Cys-41/Cys-56.

Belongs to the Hau1a/HC18/HC19 family.

It is found in the secreted. It localises to the nematocyst. Its function is as follows. Toxin that is lethal to crab. Does not produce the typical symptoms associated with sodium channel toxins in crabs, suggesting that it likely does not act on sodium channels. This chain is U-stichotoxin-Hcr1b, found in Radianthus crispa (Leathery sea anemone).